The primary structure comprises 503 residues: Cytochrome P450 6l1 (503 aa).

Cysteine 438 is a heme binding site.

The protein belongs to the cytochrome P450 family. It depends on heme as a cofactor. Detected only in testes and accessory glands of male adults.

The protein localises to the endoplasmic reticulum membrane. It localises to the microsome membrane. This is Cytochrome P450 6l1 (CYP6L1) from Blattella germanica (German cockroach).